The sequence spans 330 residues: Nodulation protein D 2 (330 aa).

The region spanning 6-63 is the HTH lysR-type domain; that stretch reads LDLNLLVALDALITERNLSSAARKINLSQPAMSAAVARLRKHFRDELFGMRGRELVLS. A DNA-binding region (H-T-H motif) is located at residues 23–42; it reads LSSAARKINLSQPAMSAAVA. Positions 308–330 are disordered; sequence RVTSSPEDAEPPGHFVRSVSPLP.

Belongs to the LysR transcriptional regulatory family.

Functionally, nodD regulates the expression of the nodABCFE genes which encode other nodulation proteins. NodD is also a negative regulator of its own expression. Binds flavonoids as inducers. This Bradyrhizobium diazoefficiens (strain JCM 10833 / BCRC 13528 / IAM 13628 / NBRC 14792 / USDA 110) protein is Nodulation protein D 2 (nodD2).